A 416-amino-acid polypeptide reads, in one-letter code: Serine hydroxymethyltransferase 1 (416 aa).

(6S)-5,6,7,8-tetrahydrofolate is bound by residues Leu-121 and Gly-125 to Leu-127. Lys-229 is subject to N6-(pyridoxal phosphate)lysine. (6S)-5,6,7,8-tetrahydrofolate is bound by residues Glu-245 and Ser-354–Phe-356.

Belongs to the SHMT family. As to quaternary structure, homodimer. The cofactor is pyridoxal 5'-phosphate.

The protein localises to the cytoplasm. The enzyme catalyses (6R)-5,10-methylene-5,6,7,8-tetrahydrofolate + glycine + H2O = (6S)-5,6,7,8-tetrahydrofolate + L-serine. The protein operates within one-carbon metabolism; tetrahydrofolate interconversion. It participates in amino-acid biosynthesis; glycine biosynthesis; glycine from L-serine: step 1/1. Functionally, catalyzes the reversible interconversion of serine and glycine with tetrahydrofolate (THF) serving as the one-carbon carrier. This reaction serves as the major source of one-carbon groups required for the biosynthesis of purines, thymidylate, methionine, and other important biomolecules. Also exhibits THF-independent aldolase activity toward beta-hydroxyamino acids, producing glycine and aldehydes, via a retro-aldol mechanism. This Vibrio cholerae serotype O1 (strain ATCC 39315 / El Tor Inaba N16961) protein is Serine hydroxymethyltransferase 1.